The sequence spans 412 residues: Lysosomal phospholipase A and acyltransferase (412 aa).

The N-terminal stretch at 1–33 (MDRHLCTCRETQLRSGLLLPLFLLMMLADLTLP) is a signal peptide. Asp46 is a binding site for substrate. Cysteines 65 and 89 form a disulfide. A glycan (N-linked (GlcNAc...) asparagine) is linked at Asn99. Catalysis depends on Ser198, which acts as the Acyl-ester intermediate. Residue Ser198 participates in Zn(2+) binding. Met199 contacts substrate. 2 N-linked (GlcNAc...) asparagine glycosylation sites follow: Asn273 and Asn289. Zn(2+) is bound at residue Cys355. Active-site charge relay system residues include Asp360 and His392. His392 is a binding site for Zn(2+). Residue Asn398 is glycosylated (N-linked (GlcNAc...) asparagine).

This sequence belongs to the AB hydrolase superfamily. Lipase family. Post-translationally, N-glycosylated. N-glycosylation is important for maturation of the enzyme and normal subcellular location. Detected in blood plasma. Detected in alveolar macrophages (at protein level). Detected in heart, liver, spleen, kidney, thymus, brain and lung.

Its subcellular location is the secreted. It localises to the lysosome. The protein resides in the membrane. The enzyme catalyses a 1,2-diacyl-sn-glycero-3-phosphocholine + H2O = a 2-acyl-sn-glycero-3-phosphocholine + a fatty acid + H(+). It carries out the reaction 1-hexadecanoyl-2-(9Z-octadecenoyl)-sn-glycero-3-phosphocholine + H2O = 2-(9Z-octadecenoyl)-sn-glycero-3-phosphocholine + hexadecanoate + H(+). The catalysed reaction is 1,2-di-(9Z-octadecenoyl)-sn-glycero-3-phosphocholine + H2O = 2-(9Z-octadecenoyl)-sn-glycero-3-phosphocholine + (9Z)-octadecenoate + H(+). It catalyses the reaction 1-hexadecanoyl-2-glutaroyl-sn-glycero-3-phosphocholine + H2O = 2-glutaroyl-sn-glycero-3-phosphocholine + hexadecanoate + H(+). The enzyme catalyses 1-hexadecanoyl-2-nonadioyl-sn-glycero-3-phosphocholine + H2O = 2-nonadioyl-sn-glycero-3-phosphocholine + hexadecanoate + H(+). It carries out the reaction 1-hexadecanoyl-2-(5-oxopentanoyl)-sn-glycero-3-phosphocholine + H2O = 2-(5-oxopentanoyl)-sn-glycero-3-phosphocholine + hexadecanoate + H(+). The catalysed reaction is 1-hexadecanoyl-2-(9-oxononanoyl)-sn-glycero-3-phosphocholine + H2O = 2-(9-oxononanoyl)-sn-glycero-3-phosphocholine + hexadecanoate + H(+). It catalyses the reaction 1,2-dihexadecanoyl-sn-glycero-3-phosphocholine + H2O = 2-hexadecanoyl-sn-glycero-3-phosphocholine + hexadecanoate + H(+). The enzyme catalyses a 1,2-diacyl-sn-glycero-3-phosphocholine + H2O = a 1-acyl-sn-glycero-3-phosphocholine + a fatty acid + H(+). It carries out the reaction 1-hexadecanoyl-2-(9Z-octadecenoyl)-sn-glycero-3-phosphocholine + H2O = 1-hexadecanoyl-sn-glycero-3-phosphocholine + (9Z)-octadecenoate + H(+). The catalysed reaction is 1,2-di-(9Z-octadecenoyl)-sn-glycero-3-phosphocholine + H2O = 1-(9Z-octadecenoyl)-sn-glycero-3-phosphocholine + (9Z)-octadecenoate + H(+). It catalyses the reaction 1,2-dihexadecanoyl-sn-glycero-3-phosphocholine + H2O = 1-hexadecanoyl-sn-glycero-3-phosphocholine + hexadecanoate + H(+). The enzyme catalyses a 1-acyl-sn-glycero-3-phosphocholine + H2O = sn-glycerol 3-phosphocholine + a fatty acid + H(+). It carries out the reaction 1-hexadecanoyl-sn-glycero-3-phosphocholine + H2O = sn-glycerol 3-phosphocholine + hexadecanoate + H(+). The catalysed reaction is N-(acetyl)-sphing-4-enine + a 1,2-diacyl-sn-glycero-3-phosphoethanolamine = 1-O-acyl-N-(acetyl)-sphing-4-enine + a 2-acyl-sn-glycero-3-phosphoethanolamine. It catalyses the reaction 1-hexadecanoyl-2-(9Z-octadecenoyl)-sn-glycero-3-phosphoethanolamine + N-(acetyl)-sphing-4-enine = 2-(9Z-octadecenoyl)-sn-glycero-3-phosphoethanolamine + 1-hexadecanoyl-N-(acetyl)-sphing-4-enine. The enzyme catalyses 1-hexadecanoyl-2-(9Z,12Z-octadecadienoyl)-sn-glycero-3-phosphoethanolamine + N-(acetyl)-sphing-4-enine = 2-(9Z,12Z)-octadecadienoyl-sn-glycero-3-phosphoethanolamine + 1-hexadecanoyl-N-(acetyl)-sphing-4-enine. It carries out the reaction 1-hexadecanoyl-2-(5Z,8Z,11Z,14Z-eicosatetraenoyl)-sn-glycero-3-phosphoethanolamine + N-(acetyl)-sphing-4-enine = 2-(5Z,8Z,11Z,14Z)-eicosatetraenoyl-sn-glycero-3-phosphoethanolamine + 1-hexadecanoyl-N-(acetyl)-sphing-4-enine. The catalysed reaction is N-(acetyl)-sphing-4-enine + a 1,2-diacyl-sn-glycero-3-phosphoethanolamine = 1-O-acyl-N-(acetyl)-sphing-4-enine + a 1-acyl-sn-glycero-3-phosphoethanolamine. It catalyses the reaction 1-hexadecanoyl-2-(9Z-octadecenoyl)-sn-glycero-3-phosphoethanolamine + N-(acetyl)-sphing-4-enine = 1-(9Z-octadecenoyl)-N-(acetyl)-sphing-4-enine + 1-hexadecanoyl-sn-glycero-3-phosphoethanolamine. The enzyme catalyses 1-hexadecanoyl-2-(9Z,12Z-octadecadienoyl)-sn-glycero-3-phosphoethanolamine + N-(acetyl)-sphing-4-enine = 1-(9Z,12Z-octadecadienoyl)-N-acetylsphing-4-enine + 1-hexadecanoyl-sn-glycero-3-phosphoethanolamine. It carries out the reaction 1-hexadecanoyl-2-(5Z,8Z,11Z,14Z-eicosatetraenoyl)-sn-glycero-3-phosphoethanolamine + N-(acetyl)-sphing-4-enine = 1-(5Z,8Z,11Z,14Z)-eicosatetraenoyl-N-(acetyl)-sphing-4-enine + 1-hexadecanoyl-sn-glycero-3-phosphoethanolamine. The catalysed reaction is N-(acetyl)-sphing-4-enine + a 1,2-diacyl-sn-glycero-3-phosphocholine = 1-O-acyl-N-(acetyl)-sphing-4-enine + a 2-acyl-sn-glycero-3-phosphocholine. It catalyses the reaction 1-hexadecanoyl-2-(9Z-octadecenoyl)-sn-glycero-3-phosphocholine + N-(acetyl)-sphing-4-enine = 1-hexadecanoyl-N-(acetyl)-sphing-4-enine + 2-(9Z-octadecenoyl)-sn-glycero-3-phosphocholine. The enzyme catalyses 1-hexadecanoyl-2-(9Z,12Z-octadecadienoyl)-sn-glycero-3-phosphocholine + N-(acetyl)-sphing-4-enine = 2-(9Z,12Z-octadecadienoyl)-sn-glycero-3-phosphocholine + 1-hexadecanoyl-N-(acetyl)-sphing-4-enine. It carries out the reaction 1-hexadecanoyl-2-(5Z,8Z,11Z,14Z-eicosatetraenoyl)-sn-glycero-3-phosphocholine + N-(acetyl)-sphing-4-enine = 1-hexadecanoyl-N-(acetyl)-sphing-4-enine + 2-(5Z,8Z,11Z,14Z)-eicosatetraenoyl-sn-glycero-3-phosphocholine. The catalysed reaction is 1-hexadecanoyl-2-(4Z,7Z,10Z,13Z,16Z,19Z-docosahexaenoyl)-sn-glycero-3-phosphocholine + N-(acetyl)-sphing-4-enine = 2-(4Z,7Z,10Z,13Z,16Z,19Z-docosahexaenoyl)-sn-glycero-3-phosphocholine + 1-hexadecanoyl-N-(acetyl)-sphing-4-enine. It catalyses the reaction 1-hexadecanoyl-2-nonadioyl-sn-glycero-3-phosphocholine + N-(acetyl)-sphing-4-enine = 2-nonadioyl-sn-glycero-3-phosphocholine + 1-hexadecanoyl-N-(acetyl)-sphing-4-enine. The enzyme catalyses 1-octadecanoyl-2-(9Z-octadecenoyl)-sn-glycero-3-phosphocholine + N-(acetyl)-sphing-4-enine = 1-octadecanoyl-N-(acetyl)-sphing-4-enine + 2-(9Z-octadecenoyl)-sn-glycero-3-phosphocholine. It carries out the reaction 1-(9Z)-octadecenoyl-2-octadecanoyl-sn-glycero-3-phosphocholine + N-(acetyl)-sphing-4-enine = 2-octadecanoyl-sn-glycero-3-phosphocholine + 1-(9Z-octadecenoyl)-N-(acetyl)-sphing-4-enine. The catalysed reaction is 1-octadecanoyl-2-(5Z,8Z,11Z,14Z-eicosatetraenoyl)-sn-glycero-3-phosphocholine + N-(acetyl)-sphing-4-enine = 1-octadecanoyl-N-(acetyl)-sphing-4-enine + 2-(5Z,8Z,11Z,14Z)-eicosatetraenoyl-sn-glycero-3-phosphocholine. It catalyses the reaction 1-(9Z-octadecenoyl)-2-hexadecanoyl-sn-glycero-3-phosphocholine + N-(acetyl)-sphing-4-enine = 1-(9Z-octadecenoyl)-N-(acetyl)-sphing-4-enine + 2-hexadecanoyl-sn-glycero-3-phosphocholine. The enzyme catalyses N-(acetyl)-sphing-4-enine + a 1,2-diacyl-sn-glycero-3-phosphocholine = 1-O-acyl-N-(acetyl)-sphing-4-enine + a 1-acyl-sn-glycero-3-phosphocholine. It carries out the reaction 1-hexadecanoyl-2-(9Z-octadecenoyl)-sn-glycero-3-phosphocholine + N-(acetyl)-sphing-4-enine = 1-(9Z-octadecenoyl)-N-(acetyl)-sphing-4-enine + 1-hexadecanoyl-sn-glycero-3-phosphocholine. The catalysed reaction is 1-hexadecanoyl-2-(9Z,12Z-octadecadienoyl)-sn-glycero-3-phosphocholine + N-(acetyl)-sphing-4-enine = 1-(9Z,12Z-octadecadienoyl)-N-acetylsphing-4-enine + 1-hexadecanoyl-sn-glycero-3-phosphocholine. It catalyses the reaction 1-hexadecanoyl-2-(5Z,8Z,11Z,14Z-eicosatetraenoyl)-sn-glycero-3-phosphocholine + N-(acetyl)-sphing-4-enine = 1-(5Z,8Z,11Z,14Z)-eicosatetraenoyl-N-(acetyl)-sphing-4-enine + 1-hexadecanoyl-sn-glycero-3-phosphocholine. The enzyme catalyses 1-hexadecanoyl-2-(4Z,7Z,10Z,13Z,16Z,19Z-docosahexaenoyl)-sn-glycero-3-phosphocholine + N-(acetyl)-sphing-4-enine = 1-(4Z,7Z,10Z,13Z,16Z,19Z-docosahexaenoyl)-N-(acetyl)-sphing-4-enine + 1-hexadecanoyl-sn-glycero-3-phosphocholine. It carries out the reaction 1-octadecanoyl-2-(9Z-octadecenoyl)-sn-glycero-3-phosphocholine + N-(acetyl)-sphing-4-enine = 1-(9Z-octadecenoyl)-N-(acetyl)-sphing-4-enine + 1-octadecanoyl-sn-glycero-3-phosphocholine. The catalysed reaction is 1-octadecanoyl-2-(9Z,12Z)-octadecadienoyl-sn-glycero-3-phosphocholine + N-(acetyl)-sphing-4-enine = 1-(9Z,12Z-octadecadienoyl)-N-acetylsphing-4-enine + 1-octadecanoyl-sn-glycero-3-phosphocholine. It catalyses the reaction 1-(9Z-octadecenoyl)-2-hexadecanoyl-sn-glycero-3-phosphocholine + N-(acetyl)-sphing-4-enine = 1-hexadecanoyl-N-(acetyl)-sphing-4-enine + 1-(9Z-octadecenoyl)-sn-glycero-3-phosphocholine. The enzyme catalyses 1-(9Z)-octadecenoyl-2-octadecanoyl-sn-glycero-3-phosphocholine + N-(acetyl)-sphing-4-enine = 1-octadecanoyl-N-(acetyl)-sphing-4-enine + 1-(9Z-octadecenoyl)-sn-glycero-3-phosphocholine. It carries out the reaction 1,2-di-(9Z-octadecenoyl)-sn-glycero-3-phosphocholine + N-(acetyl)-sphing-4-enine = 1-(9Z-octadecenoyl)-N-(acetyl)-sphing-4-enine + 1-(9Z-octadecenoyl)-sn-glycero-3-phosphocholine. The catalysed reaction is 1-octadecanoyl-2-(5Z,8Z,11Z,14Z-eicosatetraenoyl)-sn-glycero-3-phosphocholine + N-(acetyl)-sphing-4-enine = 1-(5Z,8Z,11Z,14Z)-eicosatetraenoyl-N-(acetyl)-sphing-4-enine + 1-octadecanoyl-sn-glycero-3-phosphocholine. It catalyses the reaction a 1,2-diacyl-sn-glycero-3-phospho-L-serine + N-(acetyl)-sphing-4-enine = a 2-acyl-sn-glycero-3-phospho-L-serine + 1-O-acyl-N-(acetyl)-sphing-4-enine. The enzyme catalyses 1-octadecanoyl-2-(9Z-octadecenoyl)-sn-glycero-3-phospho-L-serine + N-(acetyl)-sphing-4-enine = 2-(9Z-octadecenoyl)-sn-glycero-3-phospho-L-serine + 1-octadecanoyl-N-(acetyl)-sphing-4-enine. It carries out the reaction a 1,2-diacyl-sn-glycero-3-phospho-L-serine + N-(acetyl)-sphing-4-enine = 1-O-acyl-N-(acetyl)-sphing-4-enine + a 1-acyl-sn-glycero-3-phospho-L-serine. The catalysed reaction is 1-octadecanoyl-2-(9Z-octadecenoyl)-sn-glycero-3-phospho-L-serine + N-(acetyl)-sphing-4-enine = 1-octadecanoyl-sn-glycero-3-phosphoserine + 1-(9Z-octadecenoyl)-N-(acetyl)-sphing-4-enine. It catalyses the reaction a 1,2-diacyl-sn-glycero-3-phospho-(1'-sn-glycerol) + N-(acetyl)-sphing-4-enine = 2-acyl-sn-glycero-3-phospho-(1'-sn-glycerol) + 1-O-acyl-N-(acetyl)-sphing-4-enine. The enzyme catalyses 1-octadecanoyl-2-(9Z-octadecenoyl)-sn-glycero-3-phospho-(1'-sn-glycerol) + N-(acetyl)-sphing-4-enine = 2-(9Z-octadecenoyl)-sn-glycero-3-phospho-(1'-sn-glycerol) + 1-octadecanoyl-N-(acetyl)-sphing-4-enine. It carries out the reaction a 1,2-diacyl-sn-glycero-3-phospho-(1'-sn-glycerol) + N-(acetyl)-sphing-4-enine = 1-O-acyl-N-(acetyl)-sphing-4-enine + 1-acyl-sn-glycero-3-phospho-(1'-sn-glycerol). The catalysed reaction is 1-octadecanoyl-2-(9Z-octadecenoyl)-sn-glycero-3-phospho-(1'-sn-glycerol) + N-(acetyl)-sphing-4-enine = 1-octadecanoyl-sn-glycero-3-phospho-(1'-sn-glycerol) + 1-(9Z-octadecenoyl)-N-(acetyl)-sphing-4-enine. It catalyses the reaction an N-acylethanolamine + a 1,2-diacyl-sn-glycero-3-phosphocholine = 2-(acylamino)ethyl fatty acid + a 2-acyl-sn-glycero-3-phosphocholine. The enzyme catalyses an N-acylethanolamine + a 1,2-diacyl-sn-glycero-3-phosphocholine = 2-(acylamino)ethyl fatty acid + a 1-acyl-sn-glycero-3-phosphocholine. It carries out the reaction N-(5Z,8Z,11Z,14Z-eicosatetraenoyl)-ethanolamine + 1,2-di-(9Z-octadecenoyl)-sn-glycero-3-phosphocholine = 2-[(5Z,8Z,11Z,14Z)-eicosatetraenoylamino]ethyl (9Z)-octadecenoate + (9Z-octadecenoyl)-sn-glycero-3-phosphocholine. The catalysed reaction is N-(9Z-octadecenoyl) ethanolamine + 1,2-di-(9Z-octadecenoyl)-sn-glycero-3-phosphocholine = 2-[(9Z)-octadecenoylamino]ethyl (9Z)-octadecenoate + (9Z-octadecenoyl)-sn-glycero-3-phosphocholine. It catalyses the reaction a 3-acyl-sn-glycerol + a 1,2-diacyl-sn-glycero-3-phosphocholine = a 1,3-diacylglycerol + a 1-acyl-sn-glycero-3-phosphocholine. The enzyme catalyses a 3-acyl-sn-glycerol + a 1,2-diacyl-sn-glycero-3-phosphocholine = a 1,3-diacylglycerol + a 2-acyl-sn-glycero-3-phosphocholine. It carries out the reaction 3-(9Z-octadecenoyl)-sn-glycerol + 1,2-di-(9Z-octadecenoyl)-sn-glycero-3-phosphocholine = 1,3-di-(9Z-octadecenoyl)-glycerol + (9Z-octadecenoyl)-sn-glycero-3-phosphocholine. The catalysed reaction is 3-hexadecanoyl-sn-glycerol + 1,2-di-(9Z-octadecenoyl)-sn-glycero-3-phosphocholine = 1-(9Z)-octadecenoyl-3-hexadecanoyl-sn-glycerol + (9Z-octadecenoyl)-sn-glycero-3-phosphocholine. It catalyses the reaction a 1-acyl-sn-glycerol + a 1,2-diacyl-sn-glycero-3-phosphocholine = a 1,3-diacylglycerol + a 2-acyl-sn-glycero-3-phosphocholine. The enzyme catalyses a 1-acyl-sn-glycerol + a 1,2-diacyl-sn-glycero-3-phosphocholine = a 1,3-diacylglycerol + a 1-acyl-sn-glycero-3-phosphocholine. It carries out the reaction 1-(9Z-octadecenoyl)-sn-glycerol + 1,2-di-(9Z-octadecenoyl)-sn-glycero-3-phosphocholine = 1,3-di-(9Z-octadecenoyl)-glycerol + (9Z-octadecenoyl)-sn-glycero-3-phosphocholine. The catalysed reaction is 1-hexadecanoyl-sn-glycerol + 1,2-di-(9Z-octadecenoyl)-sn-glycero-3-phosphocholine = 1-hexadecanoyl-3-(9Z)-octadecenoyl-sn-glycerol + (9Z-octadecenoyl)-sn-glycero-3-phosphocholine. It catalyses the reaction a 2-acylglycerol + a 1,2-diacyl-sn-glycero-3-phosphocholine = a 1,2-diacylglycerol + a 2-acyl-sn-glycero-3-phosphocholine. The enzyme catalyses a 2-acylglycerol + a 1,2-diacyl-sn-glycero-3-phosphocholine = a 1,2-diacylglycerol + a 1-acyl-sn-glycero-3-phosphocholine. It carries out the reaction 2-hexadecanoylglycerol + 1,2-di-(9Z-octadecenoyl)-sn-glycero-3-phosphocholine = 1-(9Z)-octadecenoyl-2-hexadecanoylglycerol + (9Z-octadecenoyl)-sn-glycero-3-phosphocholine. The catalysed reaction is 1-O-alkylglycerol + a 1,2-diacyl-sn-glycero-3-phosphocholine = 1-O-alkyl-3-acylglycerol + a 1-acyl-sn-glycero-3-phosphocholine. It catalyses the reaction 1-O-alkylglycerol + a 1,2-diacyl-sn-glycero-3-phosphocholine = 1-O-alkyl-3-acylglycerol + a 2-acyl-sn-glycero-3-phosphocholine. The enzyme catalyses 1-O-hexadecylglycerol + 1,2-di-(9Z-octadecenoyl)-sn-glycero-3-phosphocholine = 1-O-hexadecyl-3-(9Z)-octadecenoylglycerol + (9Z-octadecenoyl)-sn-glycero-3-phosphocholine. It carries out the reaction 1-O-alkyl-2-acyl-sn-glycerol + a 1,2-diacyl-sn-glycero-3-phosphocholine = 1-O-alkyl-2,3-diacyl-sn-glycerol + a 2-acyl-sn-glycero-3-phosphocholine. The catalysed reaction is 1-O-alkyl-2-acyl-sn-glycerol + a 1,2-diacyl-sn-glycero-3-phosphocholine = 1-O-alkyl-2,3-diacyl-sn-glycerol + a 1-acyl-sn-glycero-3-phosphocholine. It catalyses the reaction 1-O-hexadecyl-2-acetyl-sn-glycerol + 1,2-di-(9Z-octadecenoyl)-sn-glycero-3-phosphocholine = 1-O-hexadecyl-2-acetyl-3-(9Z)-octadecenoyl-sn-glycerol + (9Z-octadecenoyl)-sn-glycero-3-phosphocholine. The enzyme catalyses 1-O-hexadecyl-2-O-methyl-sn-glycerol + 1,2-di-(9Z-octadecenoyl)-sn-glycero-3-phosphocholine = 1-O-hexadecyl-2-O-methyl-3-(9Z)-octadecenoyl-sn-glycerol + (9Z-octadecenoyl)-sn-glycero-3-phosphocholine. It carries out the reaction a 1,2-diacyl-sn-glycero-3-phosphoethanolamine + H2O = a 1-acyl-sn-glycero-3-phosphoethanolamine + a fatty acid + H(+). The catalysed reaction is 1-acyl-2-(5Z,8Z,11Z,14Z)-eicosatetraenoyl-sn-glycero-3-phosphoethanolamine + H2O = a 1-acyl-sn-glycero-3-phosphoethanolamine + (5Z,8Z,11Z,14Z)-eicosatetraenoate + H(+). It catalyses the reaction a 1,2-diacyl-sn-glycero-3-phospho-(1'-sn-glycerol) + H2O = 1-acyl-sn-glycero-3-phospho-(1'-sn-glycerol) + a fatty acid + H(+). The enzyme catalyses 1-hexadecanoyl-2-(9Z-octadecenoyl)-sn-glycero-3-phospho-(1'-sn-glycerol) + H2O = 1-hexadecanoyl-sn-glycero-3-phospho-(1'-sn-glycerol) + (9Z)-octadecenoate + H(+). It carries out the reaction a 1,2-diacyl-sn-glycero-3-phospho-(1'-sn-glycerol) + H2O = 2-acyl-sn-glycero-3-phospho-(1'-sn-glycerol) + a fatty acid + H(+). The catalysed reaction is 1-hexadecanoyl-2-(9Z-octadecenoyl)-sn-glycero-3-phospho-(1'-sn-glycerol) + H2O = 2-(9Z-octadecenoyl)-sn-glycero-3-phospho-(1'-sn-glycerol) + hexadecanoate + H(+). Phospholipase sn-2 versus sn-1 positional specificity is affected by the phospholipid composition of membranes. Phospholipase A2 activity toward 1-hexadecanoyl-2-(5Z,8Z,11Z,14Z-eicosatetraenoyl)-sn-glycero-3-phosphocholine (PAPE) is enhanced in the presence of 1,2-dioleoyl-sn-glycero-3-phosphocholine (DOPC), which promotes lipid bilayer formation. O-acyltransferase activity is inhibited by antiarrhythmic drug amiodarone. Has dual calcium-independent phospholipase and O-acyltransferase activities with a potential role in glycerophospholipid homeostasis and remodeling of acyl groups of lipophilic alcohols present in acidic cellular compartments. Catalyzes hydrolysis of the ester bond of the fatty acyl group attached at sn-1 or sn-2 position of phospholipids (phospholipase A1 or A2 activity) and transfer it to the hydroxyl group at the first carbon of lipophilic alcohols (O-acyltransferase activity). Among preferred fatty acyl donors are phosphatidylcholines, phosphatidylethanolamines, phosphatidylglycerols and phosphatidylserines. Favors sn-2 over sn-1 deacylation of unsaturated fatty acyl groups of phosphatidylcholines, phosphatidylethanolamines, and phosphatidylglycerols. Among preferred fatty acyl acceptors are natural lipophilic alcohols including short-chain ceramide N-acetyl-sphingosine (C2 ceramide), alkylacylglycerols, monoacylglycerols, and acylethanolamides such as anandamide and oleoylethanolamide. Selectively hydrolyzes the sn-1 fatty acyl group of truncated oxidized phospholipids and may play a role in detoxification of reactive oxidized phospholipids during oxidative stress. Required for normal phospholipid degradation in alveolar macrophages with potential implications in the clearance of pulmonary surfactant, which is mainly composed of dipalmitoylphosphatidylcholine (1,2-dihexadecanoyl-sn-glycero-3-phosphocholine). Involved in the first step of bis(monoacylglycero)phosphate (BMP) de novo synthesis from phosphatidylglycerol (1,2-diacyl-sn-glycero-3-phospho-(1'-sn-glycerol), PG). BMP is an important player in cargo sorting and degradation, regulation of cellular cholesterol levels and intercellular communication. At neutral pH, hydrolyzes the sn-1 fatty acyl group of the lysophosphatidylcholines. The protein is Lysosomal phospholipase A and acyltransferase of Mus musculus (Mouse).